Reading from the N-terminus, the 543-residue chain is Thiamine transport system permease protein ThiP (543 aa).

12 consecutive transmembrane segments (helical) span residues 19–39, 64–84, 102–122, 142–162, 205–225, 250–270, 300–320, 343–363, 379–399, 406–426, 468–488, and 510–530; these read VAGG…LLAL, FTIW…IPIA, LFAL…TSIY, DIYG…PLAV, GMIG…LTLG, AVAL…ILRL, IIVI…VVVS, LALG…LVAA, GASL…FILL, FVMA…PFAV, GMAF…IALF, and FDAA…MMIA. Residues 62-266 form the ABC transmembrane type-1 1 domain; it reads ARFTIWQAVA…QLALTLLILL (205 aa). The ABC transmembrane type-1 2 domain maps to 339 to 530; sequence IATSLALGFS…VLCLALMMIA (192 aa).

It belongs to the binding-protein-dependent transport system permease family. CysTW subfamily. The complex is composed of two ATP-binding proteins (ThiQ), two transmembrane proteins (ThiP) and a solute-binding protein (ThiB).

It localises to the cell inner membrane. Functionally, part of the ABC transporter complex ThiBPQ involved in thiamine import. Probably responsible for the translocation of the substrate across the membrane. The sequence is that of Thiamine transport system permease protein ThiP (thiP) from Brucella abortus (strain 2308).